The following is a 169-amino-acid chain: Glutathione peroxidase (169 aa).

Residue Sec-43 is part of the active site. Sec-43 is a non-standard amino acid (selenocysteine).

It belongs to the glutathione peroxidase family.

The enzyme catalyses 2 glutathione + H2O2 = glutathione disulfide + 2 H2O. This Schistosoma mansoni (Blood fluke) protein is Glutathione peroxidase (GPX1).